We begin with the raw amino-acid sequence, 233 residues long: Lipoprotein-releasing system ATP-binding protein LolD (233 aa).

The region spanning 6-233 (LQCDNLCKRY…TAELSLMGAE (228 aa)) is the ABC transporter domain. 42–49 (GSSGSGKS) serves as a coordination point for ATP.

The protein belongs to the ABC transporter superfamily. Lipoprotein translocase (TC 3.A.1.125) family. The complex is composed of two ATP-binding proteins (LolD) and two transmembrane proteins (LolC and LolE).

Its subcellular location is the cell inner membrane. Functionally, part of the ABC transporter complex LolCDE involved in the translocation of mature outer membrane-directed lipoproteins, from the inner membrane to the periplasmic chaperone, LolA. Responsible for the formation of the LolA-lipoprotein complex in an ATP-dependent manner. This chain is Lipoprotein-releasing system ATP-binding protein LolD, found in Shigella boydii serotype 4 (strain Sb227).